Reading from the N-terminus, the 113-residue chain is Large ribosomal subunit protein bL19m (113 aa).

The protein belongs to the bacterial ribosomal protein bL19 family.

Its subcellular location is the mitochondrion. This is Large ribosomal subunit protein bL19m (RPL19) from Reclinomonas americana.